The following is a 529-amino-acid chain: uncharacterized protein (529 aa).

D389 functions as the Nucleophile in the catalytic mechanism. E392 is a catalytic residue. D459 functions as the Proton donor in the catalytic mechanism.

It belongs to the glycosyl hydrolase 31 family.

This is an uncharacterized protein from Pseudescherichia vulneris (Escherichia vulneris).